Consider the following 396-residue polypeptide: S-adenosylmethionine synthase 4 (396 aa).

A Mg(2+)-binding site is contributed by Glu13. His19 is an ATP binding site. Glu47 serves as a coordination point for K(+). Positions 60 and 103 each coordinate L-methionine. ATP contacts are provided by residues 171–173, 239–242, Asp250, 256–257, Ala273, Lys277, and Lys281; these read DGK, SGRF, and RK. An L-methionine-binding site is contributed by Asp250. Position 281 (Lys281) interacts with L-methionine.

This sequence belongs to the AdoMet synthase family. Homotetramer. It depends on Mn(2+) as a cofactor. Mg(2+) serves as cofactor. Co(2+) is required as a cofactor. The cofactor is K(+). In terms of tissue distribution, expressed in roots, stems and leaves (at protein level).

Its subcellular location is the cytoplasm. It catalyses the reaction L-methionine + ATP + H2O = S-adenosyl-L-methionine + phosphate + diphosphate. Its pathway is amino-acid biosynthesis; S-adenosyl-L-methionine biosynthesis; S-adenosyl-L-methionine from L-methionine: step 1/1. Functionally, catalyzes the formation of S-adenosylmethionine from methionine and ATP. The reaction comprises two steps that are both catalyzed by the same enzyme: formation of S-adenosylmethionine (AdoMet) and triphosphate, and subsequent hydrolysis of the triphosphate. May be involved in the synthesis of betain in response to abiotic stress such as high salinity. This Atriplex nummularia (Old man saltbush) protein is S-adenosylmethionine synthase 4 (SAMS4).